The chain runs to 398 residues: Phosphoglycerate kinase (398 aa).

Substrate contacts are provided by residues 23-25 (DFN), R38, 61-64 (HLGK), R122, and R155. ATP is bound by residues K206, G297, E328, and 354–357 (GGDS).

Belongs to the phosphoglycerate kinase family. Monomer.

It localises to the cytoplasm. It catalyses the reaction (2R)-3-phosphoglycerate + ATP = (2R)-3-phospho-glyceroyl phosphate + ADP. Its pathway is carbohydrate degradation; glycolysis; pyruvate from D-glyceraldehyde 3-phosphate: step 2/5. This Clostridium kluyveri (strain NBRC 12016) protein is Phosphoglycerate kinase.